A 233-amino-acid chain; its full sequence is Large ribosomal subunit protein uL1 (233 aa).

The protein belongs to the universal ribosomal protein uL1 family. Part of the 50S ribosomal subunit.

Its function is as follows. Binds directly to 23S rRNA. The L1 stalk is quite mobile in the ribosome, and is involved in E site tRNA release. Protein L1 is also a translational repressor protein, it controls the translation of the L11 operon by binding to its mRNA. This is Large ribosomal subunit protein uL1 from Syntrophomonas wolfei subsp. wolfei (strain DSM 2245B / Goettingen).